The following is a 259-amino-acid chain: MFDIGVNLTSTQFAKDRDKVIKRAREAGVSGMLITGTNALESQQALSLARQHPDYCWSTAGVHPHHASEWSGETAATLRRLAESPQMVAIGECGLDFNRNFSDPEQQAYAFNAQLALAAELSLPVFLHCREAHERFISILKPWLPKLKAAVLHCFTGTRPELESCLAEGLFIGITGWICDERRGQELRELMPLIPADRLLLETDAPWLLPRDMRPRPPSRRNEPCFLPHIVQQVALLRGDDAGELAAQTALNARRLFNL.

The a divalent metal cation site is built by Glu92, His128, and His153.

Belongs to the metallo-dependent hydrolases superfamily. TatD-type hydrolase family. TatD subfamily. As to quaternary structure, monomer. The cofactor is Mg(2+).

Its subcellular location is the cytoplasm. 3'-5' exonuclease that prefers single-stranded DNA and RNA. May play a role in the H(2)O(2)-induced DNA damage repair. In Erwinia tasmaniensis (strain DSM 17950 / CFBP 7177 / CIP 109463 / NCPPB 4357 / Et1/99), this protein is 3'-5' ssDNA/RNA exonuclease TatD.